We begin with the raw amino-acid sequence, 283 residues long: MMTHWPSPAKLNLFLYITGQRADGYHTLQTLFQFLDYGDTLHIEPRRDGEIHLLTPVTGVENEDNLIVRAARLLMKVASESGRLPAGSGADISIEKRLPMGGGLGGGSSNAATVLVALNHLWQCGLSIDELTTLGLTLGADVPVFVRGHAAFAEGVGEILTPVNPPEKWYLVAHPGVSIPTPVIFKDPQLPRNTPKRSIDTLLKCEFSNDCEVIARKRFREVDAALSWLLEYAPSRLTGTGACVFAEFDTESCARQVLEQAPEWLNAFVAKGVNLSPLHRELL.

Residue K10 is part of the active site. 99–109 contributes to the ATP binding site; the sequence is PMGGGLGGGSS. Residue D141 is part of the active site.

It belongs to the GHMP kinase family. IspE subfamily. As to quaternary structure, homodimer.

It catalyses the reaction 4-CDP-2-C-methyl-D-erythritol + ATP = 4-CDP-2-C-methyl-D-erythritol 2-phosphate + ADP + H(+). Its pathway is isoprenoid biosynthesis; isopentenyl diphosphate biosynthesis via DXP pathway; isopentenyl diphosphate from 1-deoxy-D-xylulose 5-phosphate: step 3/6. Its function is as follows. Catalyzes the phosphorylation of the position 2 hydroxy group of 4-diphosphocytidyl-2C-methyl-D-erythritol. This is 4-diphosphocytidyl-2-C-methyl-D-erythritol kinase from Salmonella gallinarum (strain 287/91 / NCTC 13346).